We begin with the raw amino-acid sequence, 158 residues long: Large ribosomal subunit protein uL30 (158 aa).

This sequence belongs to the universal ribosomal protein uL30 family. As to quaternary structure, part of the 50S ribosomal subunit.

The protein is Large ribosomal subunit protein uL30 of Saccharolobus islandicus (strain Y.N.15.51 / Yellowstone #2) (Sulfolobus islandicus).